The chain runs to 703 residues: Polyribonucleotide nucleotidyltransferase (703 aa).

2 residues coordinate Mg(2+): aspartate 488 and aspartate 494. Positions 555-614 constitute a KH domain; sequence PRLYVMKINPEKIRDVIGKGGAVIRALTEETGTQINIEEDGTITIASNDSAKADEAKRRI. An S1 motif domain is found at 624-692; the sequence is GKVYEGAITK…EKGRVKLSMK (69 aa).

It belongs to the polyribonucleotide nucleotidyltransferase family. Mg(2+) serves as cofactor.

Its subcellular location is the cytoplasm. It catalyses the reaction RNA(n+1) + phosphate = RNA(n) + a ribonucleoside 5'-diphosphate. Involved in mRNA degradation. Catalyzes the phosphorolysis of single-stranded polyribonucleotides processively in the 3'- to 5'-direction. This chain is Polyribonucleotide nucleotidyltransferase, found in Polaromonas naphthalenivorans (strain CJ2).